The chain runs to 734 residues: Alpha-catulin (734 aa).

A phosphoserine mark is found at Ser-374 and Ser-538.

Belongs to the vinculin/alpha-catenin family. In terms of assembly, interacts with ARHGEF1. Interacts with DTNA. The interaction is required for correct localization of both CTNL1 and DTNA. Widely expressed. Expressed at lower level in neural tissues and at the highest level in the adrenal gland.

Its subcellular location is the cytoplasm. It localises to the cytoskeleton. It is found in the cell membrane. Functionally, may modulate the Rho pathway signaling by providing a scaffold for the Lbc Rho guanine nucleotide exchange factor (ARHGEF1). This is Alpha-catulin (CTNNAL1) from Homo sapiens (Human).